A 323-amino-acid polypeptide reads, in one-letter code: Aldo-keto reductase family 1 member C18 (323 aa).

NADP(+) is bound by residues 20 to 24 and aspartate 50; that span reads GFGTY. The Proton donor role is filled by tyrosine 55. Histidine 117 contributes to the substrate binding site. NADP(+) is bound by residues 166 to 167, glutamine 190, 216 to 221, and 270 to 280; these read SN, YGALGT, and KSFNEERIREN.

Belongs to the aldo/keto reductase family. Monomer.

It localises to the cytoplasm. The catalysed reaction is (17R,20S)-17,20-dihydroxypregn-4-en-3-one + NADP(+) = 17alpha-hydroxyprogesterone + NADPH + H(+). It catalyses the reaction (17R,20S)-17,20-dihydroxypregn-4-en-3-one + NAD(+) = 17alpha-hydroxyprogesterone + NADH + H(+). Functionally, catalyzes the conversion of progesterone into 20-alpha-dihydroprogesterone (20 alpha-OHP). This is Aldo-keto reductase family 1 member C18 (Akr1c18) from Mus musculus (Mouse).